The chain runs to 185 residues: Ribosome-recycling factor (185 aa).

This sequence belongs to the RRF family.

It is found in the cytoplasm. Responsible for the release of ribosomes from messenger RNA at the termination of protein biosynthesis. May increase the efficiency of translation by recycling ribosomes from one round of translation to another. This Shewanella sediminis (strain HAW-EB3) protein is Ribosome-recycling factor.